A 385-amino-acid chain; its full sequence is DNA replication and repair protein RecF (385 aa).

An ATP-binding site is contributed by Gly-30 to Thr-37.

This sequence belongs to the RecF family.

The protein localises to the cytoplasm. Its function is as follows. The RecF protein is involved in DNA metabolism; it is required for DNA replication and normal SOS inducibility. RecF binds preferentially to single-stranded, linear DNA. It also seems to bind ATP. The chain is DNA replication and repair protein RecF from Mycobacterium marinum (strain ATCC BAA-535 / M).